A 393-amino-acid polypeptide reads, in one-letter code: S-adenosylmethionine synthase (393 aa).

His-16 is a binding site for ATP. Asp-18 lines the Mg(2+) pocket. Residue Glu-44 coordinates K(+). Glu-57 and Gln-100 together coordinate L-methionine. A flexible loop region spans residues 100–110; it reads QSPDIVMGVDG. ATP is bound by residues 165–167, 231–232, Asp-240, 246–247, and Lys-267; these read DAK, RF, and RK. Asp-240 contributes to the L-methionine binding site. Lys-271 is a binding site for L-methionine.

It belongs to the AdoMet synthase family. As to quaternary structure, homotetramer; dimer of dimers. Mg(2+) is required as a cofactor. K(+) serves as cofactor.

It localises to the cytoplasm. It carries out the reaction L-methionine + ATP + H2O = S-adenosyl-L-methionine + phosphate + diphosphate. It participates in amino-acid biosynthesis; S-adenosyl-L-methionine biosynthesis; S-adenosyl-L-methionine from L-methionine: step 1/1. Catalyzes the formation of S-adenosylmethionine (AdoMet) from methionine and ATP. The overall synthetic reaction is composed of two sequential steps, AdoMet formation and the subsequent tripolyphosphate hydrolysis which occurs prior to release of AdoMet from the enzyme. This chain is S-adenosylmethionine synthase, found in Coxiella burnetii (strain Dugway 5J108-111).